A 101-amino-acid chain; its full sequence is MGTRFLLALCLVLLVLGFEVQGAQLPQQDEPPSPALLSRVQESLSSYWESAKAAAQKLYEKTYLPAVDEKLRDLYSKSTAAMSTYTGIFTDQVLSVLKGEE.

The signal sequence occupies residues 1–22 (MGTRFLLALCLVLLVLGFEVQG). The segment at 66–74 (AVDEKLRDL) is lipid binding. The segment at 78–101 (STAAMSTYTGIFTDQVLSVLKGEE) is lipoprotein lipase cofactor.

The protein belongs to the apolipoprotein C2 family. Post-translationally, proapolipoprotein C-II is synthesized as a sialic acid containing glycoprotein which is subsequently desialylated prior to its proteolytic processing. In terms of processing, proapolipoprotein C-II, the major form found in plasma undergoes proteolytic cleavage of its N-terminal hexapeptide to generate apolipoprotein C-II, which occurs as the minor form in plasma.

Its subcellular location is the secreted. Its function is as follows. Component of chylomicrons, very low-density lipoproteins (VLDL), low-density lipoproteins (LDL), and high-density lipoproteins (HDL) in plasma. Plays an important role in lipoprotein metabolism as an activator of lipoprotein lipase. Both proapolipoprotein C-II and apolipoprotein C-II can activate lipoprotein lipase. The chain is Apolipoprotein C-II (APOC2) from Macaca fascicularis (Crab-eating macaque).